A 583-amino-acid polypeptide reads, in one-letter code: Protein NRT1/ PTR FAMILY 5.1 (583 aa).

The chain crosses the membrane as a helical span at residues 74 to 94; that stretch reads WSGAVWITPIAGAYIADSYIG. Thr98 carries the post-translational modification Phosphothreonine. Helical transmembrane passes span 99 to 119, 134 to 154, 182 to 202, 210 to 230, 320 to 340, 361 to 381, 405 to 425, 446 to 466, 485 to 505, and 529 to 549; these read FTASSLIYVLGMILLTMAVTV, ASSLQVTFFYISLYTIAIGAG, FFNWWMFSSFLGALFATLGLV, WGLGYGIPTVGLLVSLVVFYI, VLGLIFIWLVTLIPSTLWAQV, IPAASLGSFVTLSMLLSVPMY, LGVGFAIQIVAIAIASAVEVK, IFWLLPQYSLLGIGDVFNAIG, TFFTSGIGLGNFLNSFLVTMI, and YYYGFLVVISIVNMGLFVWAA.

Belongs to the major facilitator superfamily. Proton-dependent oligopeptide transporter (POT/PTR) (TC 2.A.17) family. Expressed in flowers. Detected in stems, leaves and siliques.

It is found in the membrane. The polypeptide is Protein NRT1/ PTR FAMILY 5.1 (NPF5.1) (Arabidopsis thaliana (Mouse-ear cress)).